A 237-amino-acid chain; its full sequence is Carbohydrate deacetylase (237 aa).

Residues H59 and H125 each contribute to the Mg(2+) site.

Belongs to the YdjC deacetylase family. The cofactor is Mg(2+).

Its function is as follows. Probably catalyzes the deacetylation of acetylated carbohydrates an important step in the degradation of oligosaccharides. This is Carbohydrate deacetylase from Halalkalibacterium halodurans (strain ATCC BAA-125 / DSM 18197 / FERM 7344 / JCM 9153 / C-125) (Bacillus halodurans).